We begin with the raw amino-acid sequence, 876 residues long: Serrate RNA effector molecule homolog (876 aa).

Residues 1 to 90 are disordered; the sequence is MGDSDDEYDR…RRDWDEHSSD (90 aa). An N-acetylglycine modification is found at glycine 2. Serine 4 bears the Phosphoserine mark. At tyrosine 8 the chain carries Phosphotyrosine. The span at 8–73 shows a compositional bias: basic and acidic residues; the sequence is YDRRRRDKFR…ERFSPPRHEL (66 aa). A phosphoserine mark is found at serine 67, serine 74, and serine 136. Lysine 150 is covalently cross-linked (Glycyl lysine isopeptide (Lys-Gly) (interchain with G-Cter in SUMO2)). Residues 272–413 form a disordered region; that stretch reads EEEEQAGKPG…PKDAPGLECK (142 aa). Residues 297–347 are compositionally biased toward basic and acidic residues; that stretch reads DGERKANEKDDKKEDGKQAENESSSDDKIKKSEGDGDKEEKKEDSEKEAKK. Residues 370 to 387 are compositionally biased toward acidic residues; sequence SESESESGQAEEEKEEAD. Over residues 388-413 the composition is skewed to basic and acidic residues; sequence ETLKEKEKPKEEEREKPKDAPGLECK. A Phosphoserine modification is found at serine 493. Threonine 544 carries the post-translational modification Phosphothreonine. At serine 570 the chain carries Phosphoserine. The interval 575–597 is disordered; it reads ELLGSSGGAPPEEPPKEGNPAEI. Threonine 671 is modified (phosphothreonine). Serine 679 bears the Phosphoserine mark. Arginine 833, arginine 840, and arginine 850 each carry omega-N-methylarginine. The disordered stretch occupies residues 835-854; the sequence is NYDAFRGQGGYPGKPRNRMV.

This sequence belongs to the ARS2 family. As to quaternary structure, interacts with CASP8AP2, ERBB4, NCBP1/CBP80 and DROSHA. Interacts with LUZP4. Interacts with NCBP2/CBP20 and NCBP3. Interacts with MTREX.

It localises to the nucleus. The protein resides in the nucleoplasm. Its subcellular location is the cytoplasm. Acts as a mediator between the cap-binding complex (CBC) and the primary microRNAs (miRNAs) processing machinery during cell proliferation. Contributes to the stability and delivery of capped primary miRNA transcripts to the primary miRNA processing complex containing DGCR8 and DROSHA, thereby playing a role in RNA-mediated gene silencing (RNAi) by miRNAs. Binds capped RNAs (m7GpppG-capped RNA); however interaction is probably mediated via its interaction with NCBP1/CBP80 component of the CBC complex. Involved in cell cycle progression at S phase. Does not directly confer arsenite resistance but rather modulates arsenic sensitivity. Independently of its activity on miRNAs, necessary and sufficient to promote neural stem cell self-renewal. Does so by directly binding SOX2 promoter and positively regulating its transcription. The chain is Serrate RNA effector molecule homolog (SRRT) from Bos taurus (Bovine).